Here is a 398-residue protein sequence, read N- to C-terminus: uncharacterized protein (398 aa).

This is an uncharacterized protein from Neisseria meningitidis serogroup B (strain ATCC BAA-335 / MC58).